A 796-amino-acid chain; its full sequence is Choline transporter-like 2 (796 aa).

Asn20 is a glycosylation site (N-linked (GlcNAc...) asparagine). A helical transmembrane segment spans residues 35–55 (PCLLLFVLFLGGWAFIAQYAI). Residues Asn209 and Asn284 are each glycosylated (N-linked (GlcNAc...) asparagine). The next 4 helical transmembrane spans lie at 304-324 (WSIVLVACFCTLVASLIYIAL), 332-352 (ILWFSIFGVLIGLLVGIYFSV), 386-406 (LYLSIFVGVCFVVILLLVIVL), and 431-451 (VFFPIFSWILFIAAIAFAIGV). Asn488 and Asn520 each carry an N-linked (GlcNAc...) asparagine glycan. 5 helical membrane-spanning segments follow: residues 542–562 (VFGFLWLSFFISAFSYMVLAS), 585–605 (FFQTAVYHLGTVAFGSLILAI), 626–648 (AVTRAILCCMRCFFWLLETFLKF), 691–711 (FLFFLSKLLLTAGAGASTYYF), and 724–744 (IAVPTTVVVIAAFLITSVFFG).

It belongs to the CTL (choline transporter-like) family.

It localises to the membrane. The sequence is that of Choline transporter-like 2 from Drosophila melanogaster (Fruit fly).